Reading from the N-terminus, the 734-residue chain is Meiotic driver SPOK1 (734 aa).

Positions 4–41 (KDRIAQLLRELEEAKARVEEAKAREAQERCEKERLQLE) form a coiled coil. 2 disordered regions span residues 180 to 222 (ELTQ…ICSN) and 414 to 499 (LSSA…MADP). The span at 416-429 (SAPSSQNTDISEYT) shows a compositional bias: polar residues. A compositionally biased stretch (basic and acidic residues) spans 457–468 (NEHDEHDEDHSE).

The protein resides in the cytoplasm. The protein localises to the nucleus. Promotes unequal transmission of alleles from the parental zygote to progeny spores by acting as poison/antidote system, leading to poisoning of progeny that do not inherit the allele. May possess DNA nuclease activity that leads to spore killing, and a kinase activity that confers resistance to the nuclease activity. Can suppress meiotic drive by the P.anserina SPOK2, SPOK3 and SPOK4 proteins. The sequence is that of Meiotic driver SPOK1 from Podospora comata.